Consider the following 1375-residue polypeptide: Probable GMP synthase [glutamine-hydrolyzing] (1375 aa).

The Glutamine amidotransferase type-1; first part domain maps to 7–119; that stretch reads QILVLDFGSQ…VLEIMESSQD (113 aa). The Nucleophile role is filled by Cys84. Positions 120 to 500 are insert-1; the sequence is SKDSSCFAFQ…NNATQGFKSC (381 aa). 2 N-acetyltransferase domains span residues 141–300 and 318–484; these read LSFD…KALE and VFLR…LEKK. A Glutamine amidotransferase type-1; second part domain is found at 501 to 580; the sequence is SLFKGIKQDS…AVGICGANTC (80 aa). Active-site residues include His554 and Glu556. Residues 597–1071 form an insert-2 region; that stretch reads IVYGGKAHCE…SGVANSLKIT (475 aa). The N-acetyltransferase 3 domain occupies 612–765; it reads MQIQEAFKHI…ELIPLSIARE (154 aa). Positions 1011–1036 are disordered; that stretch reads RIVDSQHTESSDIKGQSHLESSADSG. Positions 1014–1027 are enriched in basic and acidic residues; the sequence is DSQHTESSDIKGQS. Residues 1055–1250 form the GMPS ATP-PPase domain; it reads YLEGNDRSGV…LGMPESMLMR (196 aa). 1083–1089 is an ATP binding site; it reads SGGVDSS.

In terms of assembly, homodimer.

It catalyses the reaction XMP + L-glutamine + ATP + H2O = GMP + L-glutamate + AMP + diphosphate + 2 H(+). It participates in purine metabolism; GMP biosynthesis; GMP from XMP (L-Gln route): step 1/1. Catalyzes the synthesis of GMP from XMP. In Helicobacter hepaticus (strain ATCC 51449 / 3B1), this protein is Probable GMP synthase [glutamine-hydrolyzing] (guaA).